The following is a 228-amino-acid chain: HTH-type transcriptional activator FasR (228 aa).

The tract at residues Met-1–Glu-39 is disordered. The 61-residue stretch at Asp-38–Leu-98 folds into the HTH tetR-type domain. Residues Gly-61–Phe-80 constitute a DNA-binding region (H-T-H motif).

Homodimer.

FasR:DNA binding is regulated by long-chain acyl-CoAs (C14- to C26-CoA), which act as effector molecules that modulate the affinity of FasR for its DNA binding sequences and therefore modulate the expression of the essential fas-acpS operon. FasR activity is not affected by mycolic acid biosynthesis intermediates. Transcriptional activator that plays a central role in sensing mycobacterial long-chain fatty acids and regulating lipid biosynthesis. Activates the expression of the genes encoding the fatty acid synthase (fas) and the 4-phosphopantetheinyl transferase (acpS), whose products are involved in the fatty acid and mycolic acid biosynthesis. Specifically binds to three conserved operator sequences present in the fas-acpS promoter region. Not essential for M.tuberculosis viability, although it is required for the optimal growth in vitro and for virulence in macrophages and in a mouse model of infection. The sequence is that of HTH-type transcriptional activator FasR from Mycobacterium tuberculosis (strain ATCC 25618 / H37Rv).